The sequence spans 84 residues: Delta-stichotoxin-Sgt3a (84 aa).

The N-terminal stretch at 1–19 (MAYLKIVLVALMLVVAVSA) is a signal peptide. Positions 20 to 33 (MRLSDQEDQDISVA) are excised as a propeptide. Cystine bridges form between cysteine 38/cysteine 78, cysteine 40/cysteine 68, and cysteine 61/cysteine 79. Residue glycine 84 is a propeptide.

Belongs to the sea anemone sodium channel inhibitory toxin family. Type II subfamily.

The protein resides in the secreted. The protein localises to the nematocyst. Functionally, binds specifically to voltage-gated sodium channels (Nav), thereby delaying their inactivation during signal transduction. In Stichodactyla gigantea (Giant carpet anemone), this protein is Delta-stichotoxin-Sgt3a.